A 2282-amino-acid chain; its full sequence is Acetyl-CoA carboxylase (2282 aa).

One can recognise a Biotin carboxylation domain in the interval 16-515; it reads NIEKILIANN…HTGWLDQLIS (500 aa). An ATP-grasp domain is found at 170–360; sequence YSECNGVPSE…LPATQLQIAM (191 aa). 196–253 contributes to the ATP binding site; sequence AQRVGFPAMIKASEGGGGKGIRKVTSMEDLESSFRQVQNEVPGSPIFFMKLVSNARHL. The Mn(2+) site is built by glutamate 319, glutamate 331, and asparagine 333. Arginine 335 is a catalytic residue. Residues 646–720 enclose the Biotinyl-binding domain; that stretch reads FSQEYDPSIL…APGAIIANLE (75 aa). Lysine 687 carries the N6-biotinyllysine modification. Over residues 1109–1129 the composition is skewed to low complexity; sequence GSNSGSPTYGSPLIRSISSSG. The interval 1109–1141 is disordered; the sequence is GSNSGSPTYGSPLIRSISSSGGSSGGSGFQISP. Positions 1495 to 1851 constitute a CoA carboxyltransferase N-terminal domain; it reads PYPIMDAVQR…SGGEMVPIIS (357 aa). Positions 1495-2178 are carboxyltransferase; it reads PYPIMDAVQR…EEDKLKLIDK (684 aa). The CoA site is built by arginine 1761, lysine 2068, and arginine 2070. The CoA carboxyltransferase C-terminal domain occupies 1852 to 2178; it reads PIDSPHRDIE…EEDKLKLIDK (327 aa).

The cofactor is biotin. It depends on Mn(2+) as a cofactor.

It is found in the cytoplasm. The enzyme catalyses hydrogencarbonate + acetyl-CoA + ATP = malonyl-CoA + ADP + phosphate + H(+). The catalysed reaction is N(6)-biotinyl-L-lysyl-[protein] + hydrogencarbonate + ATP = N(6)-carboxybiotinyl-L-lysyl-[protein] + ADP + phosphate + H(+). The protein operates within lipid metabolism; malonyl-CoA biosynthesis; malonyl-CoA from acetyl-CoA: step 1/1. Catalyzes the rate-limiting reaction in the biogenesis of long-chain fatty acids. Carries out three functions: biotin carboxyl carrier protein, biotin carboxylase and carboxyltransferase. The polypeptide is Acetyl-CoA carboxylase (accA) (Dictyostelium discoideum (Social amoeba)).